An 81-amino-acid polypeptide reads, in one-letter code: Exodeoxyribonuclease 7 small subunit (81 aa).

Residues 61–81 form a disordered region; sequence MNDSDQEVAFETPQGGTGDAD.

The protein belongs to the XseB family. Heterooligomer composed of large and small subunits.

It localises to the cytoplasm. The enzyme catalyses Exonucleolytic cleavage in either 5'- to 3'- or 3'- to 5'-direction to yield nucleoside 5'-phosphates.. Its function is as follows. Bidirectionally degrades single-stranded DNA into large acid-insoluble oligonucleotides, which are then degraded further into small acid-soluble oligonucleotides. The polypeptide is Exodeoxyribonuclease 7 small subunit (Levilactobacillus brevis (strain ATCC 367 / BCRC 12310 / CIP 105137 / JCM 1170 / LMG 11437 / NCIMB 947 / NCTC 947) (Lactobacillus brevis)).